The chain runs to 551 residues: Rhodopsin kinase grk7-a (551 aa).

At Ser36 the chain carries Phosphoserine. One can recognise an RGS domain in the interval 57–174 (YQSICVEQPI…QNSPFYDRFL (118 aa)). Positions 189–451 (FYEFRILGKG…DDDPRKHAFF (263 aa)) constitute a Protein kinase domain. Residues 195 to 203 (LGKGGFGEV) and Lys218 each bind ATP. Asp314 (proton acceptor) is an active-site residue. The region spanning 452 to 517 (KSINFQRLEA…GAIPISWQKE (66 aa)) is the AGC-kinase C-terminal domain. The residue at position 487 (Ser487) is a Phosphoserine. Residues 529–551 (DPSREATGGGGNSGEKSGVCSIL) form a disordered region. A compositionally biased stretch (low complexity) spans 542–551 (GEKSGVCSIL). Cys548 carries the post-translational modification Cysteine methyl ester. Residue Cys548 is the site of S-geranylgeranyl cysteine attachment. A propeptide spans 549–551 (SIL) (removed in mature form).

Belongs to the protein kinase superfamily. AGC Ser/Thr protein kinase family. GPRK subfamily. Post-translationally, autophosphorylated in vitro at Ser-487. Phosphorylation at Ser-36 is regulated by light and activated by cAMP.

Its subcellular location is the membrane. The enzyme catalyses L-threonyl-[rhodopsin] + ATP = O-phospho-L-threonyl-[rhodopsin] + ADP + H(+). The catalysed reaction is L-seryl-[rhodopsin] + ATP = O-phospho-L-seryl-[rhodopsin] + ADP + H(+). In terms of biological role, retina-specific kinase involved in the shutoff of the photoresponse and adaptation to changing light conditions via cone opsin phosphorylation, including rhodopsin (RHO). The polypeptide is Rhodopsin kinase grk7-a (grk7-a) (Xenopus laevis (African clawed frog)).